The chain runs to 197 residues: RFKKIRRLGALPGLTSKRPRSGSDLKNQLRSGKRSQYRIRLEEKQKLRFHYGLTERQLLKYVHIAGKAKGSTGQILLQLLEMRLDNILFRLGMASTIPGARQLVNHRHILVNGRIVDIPSYRCKPRDIITTKNKQRSKALIQNFIASSPHQEELPNHLTIDPFQYKGLVNQIIDSKWIGLKINELLVVEYYSRQTDL.

The 62-residue stretch at 82 to 143 folds into the S4 RNA-binding domain; sequence MRLDNILFRL…KQRSKALIQN (62 aa).

The protein belongs to the universal ribosomal protein uS4 family. In terms of assembly, part of the 30S ribosomal subunit. Contacts protein S5. The interaction surface between S4 and S5 is involved in control of translational fidelity.

It localises to the plastid. The protein resides in the chloroplast. Its function is as follows. One of the primary rRNA binding proteins, it binds directly to 16S rRNA where it nucleates assembly of the body of the 30S subunit. In terms of biological role, with S5 and S12 plays an important role in translational accuracy. This is Small ribosomal subunit protein uS4c (rps4) from Gladiolus papilio (Goldblotch gladiolus).